The sequence spans 425 residues: UPF0597 protein UNCMA_16400 (425 aa).

It belongs to the UPF0597 family.

The chain is UPF0597 protein UNCMA_16400 from Methanocella arvoryzae (strain DSM 22066 / NBRC 105507 / MRE50).